The chain runs to 137 residues: Phosphoribosyl-AMP cyclohydrolase (137 aa).

A Mg(2+)-binding site is contributed by aspartate 84. Zn(2+) is bound at residue cysteine 85. The Mg(2+) site is built by aspartate 86 and aspartate 88. Zn(2+)-binding residues include cysteine 101 and cysteine 108.

The protein belongs to the PRA-CH family. Homodimer. It depends on Mg(2+) as a cofactor. The cofactor is Zn(2+).

It is found in the cytoplasm. It carries out the reaction 1-(5-phospho-beta-D-ribosyl)-5'-AMP + H2O = 1-(5-phospho-beta-D-ribosyl)-5-[(5-phospho-beta-D-ribosylamino)methylideneamino]imidazole-4-carboxamide. It functions in the pathway amino-acid biosynthesis; L-histidine biosynthesis; L-histidine from 5-phospho-alpha-D-ribose 1-diphosphate: step 3/9. Its function is as follows. Catalyzes the hydrolysis of the adenine ring of phosphoribosyl-AMP. In Pelodictyon phaeoclathratiforme (strain DSM 5477 / BU-1), this protein is Phosphoribosyl-AMP cyclohydrolase.